Consider the following 113-residue polypeptide: RING-box protein 2 (113 aa).

Residues 1-26 (MADVEDGEETCALASHSGSSGSKSGG) form a disordered region. N-acetylalanine is present on alanine 2. Phosphothreonine; by CK2 is present on threonine 10. Positions 50, 53, 61, 64, 73, 80, 82, 85, 87, 88, 99, and 102 each coordinate Zn(2+). The RING-type zinc-finger motif lies at 61–103 (CLRCQAENKQEDCVVVWGECNHSFHNCCMSLWVKQNNRCPLCQ).

This sequence belongs to the RING-box family. In terms of assembly, catalytic component of multiple cullin-5-RING E3 ubiquitin-protein ligase complexes (ECS complexes, also named CRL5 complexes) composed of CUL5, Elongin BC (ELOB and ELOC), RNF7/RBX2 and a variable SOCS box domain-containing protein as substrate-specific recognition component. Also interacts (with lower preference) with CUL1, CUL2, CUL3, CUL4A and CUL4B; additional evidence is however required to confirm this result in vivo. Interacts with UBE2F. Interacts with CSNK2B, the interaction is not affected by phosphorylation by CK2. May also interact with DCUN1D1, DCUN1D2, DCUN1D3, DCUN1D4 and DCUN1D5. (Microbial infection) Following infection by HIV-1 virus, component of a cullin-5-RING E3 ubiquitin-protein ligase complex (ECS complex) hijacked by the HIV-1 Vif protein. In terms of processing, phosphorylation at Thr-10 by CK2 promotes its degradation by the proteasome. As to expression, expressed in heart, liver, skeletal muscle and pancreas. At very low levels expressed in brain, placenta and lung.

The protein resides in the cytoplasm. It is found in the nucleus. The catalysed reaction is S-ubiquitinyl-[E2 ubiquitin-conjugating enzyme]-L-cysteine + [acceptor protein]-L-lysine = [E2 ubiquitin-conjugating enzyme]-L-cysteine + N(6)-ubiquitinyl-[acceptor protein]-L-lysine.. The enzyme catalyses S-[NEDD8-protein]-yl-[E2 NEDD8-conjugating enzyme]-L-cysteine + [cullin]-L-lysine = [E2 NEDD8-conjugating enzyme]-L-cysteine + N(6)-[NEDD8-protein]-yl-[cullin]-L-lysine.. The protein operates within protein modification; protein ubiquitination. Its pathway is protein modification; protein neddylation. Functionally, catalytic component of multiple cullin-5-RING E3 ubiquitin-protein ligase complexes (ECS complexes), which mediate the ubiquitination and subsequent proteasomal degradation of target proteins. It is thereby involved in various biological processes, such as cell cycle progression, signal transduction and transcription. The functional specificity of the E3 ubiquitin-protein ligase ECS complexes depend on the variable SOCS box-containing substrate recognition component. Within ECS complexes, RNF7/RBX2 recruits the E2 ubiquitination enzyme to the complex via its RING-type and brings it into close proximity to the substrate. Catalytic subunit of various SOCS-containing ECS complexes, such as the ECS(SOCS7) complex, that regulate reelin signaling by mediating ubiquitination and degradation of DAB1. The ECS(SOCS2) complex mediates the ubiquitination and subsequent proteasomal degradation of phosphorylated EPOR and GHR. Promotes ubiquitination and degradation of NF1, thereby regulating Ras protein signal transduction. As part of the ECS(ASB9) complex, catalyzes ubiquitination and degradation of CKB. The ECS(SPSB3) complex catalyzes ubiquitination of nuclear CGAS. As part of the ECS(RAB40C) complex, mediates ANKRD28 ubiquitination and degradation, thereby inhibiting protein phosphatase 6 (PP6) complex activity and focal adhesion assembly during cell migration. As part of some ECS complex, catalyzes 'Lys-11'-linked ubiquitination and degradation of BTRC. ECS complexes and ARIH2 collaborate in tandem to mediate ubiquitination of target proteins; ARIH2 mediating addition of the first ubiquitin on CRLs targets. Specifically catalyzes the neddylation of CUL5 via its interaction with UBE2F. Does not catalyze neddylation of other cullins (CUL1, CUL2, CUL3, CUL4A or CUL4B). May play a role in protecting cells from apoptosis induced by redox agents. Its function is as follows. Inactive. In terms of biological role, (Microbial infection) Following infection by HIV-1 virus, catalytic component of a cullin-5-RING E3 ubiquitin-protein ligase complex (ECS complex) hijacked by the HIV-1 Vif protein, which catalyzes ubiquitination and degradation of APOBEC3F and APOBEC3G. This chain is RING-box protein 2, found in Homo sapiens (Human).